The chain runs to 456 residues: Cytochrome P450 monooxygenase avaH (456 aa).

The helical transmembrane segment at 243 to 263 (LMSYFVSVFLVNVALFNAVSI) threads the bilayer. C403 is a binding site for heme.

The protein belongs to the cytochrome P450 family. Heme serves as cofactor.

The protein resides in the membrane. It functions in the pathway secondary metabolite biosynthesis. Functionally, cytochrome P450 monooxygenase; part of the cluster that mediates the biosynthesis of a highly modified cyclo-arginine-tryptophan dipeptide (cRW). The first step of the pathway is perfornmed by the arginine-containing cyclodipeptide synthase (RCPDS) avaA that acts as the scaffold-generating enzyme and is responsible for formation of the cyclo-Arg-Trp (cRW) diketopiperazine. AvaB then acts as a multifunctional flavoenzyme that is responsible for generating the cyclo-Arg-formylkynurenine DKP, which can be deformylated by avaC. AvaB then further catalyzes an additional N-oxidation followed by cyclization and dehydration. The next step is an N-acetylation of the guanidine group catalyzed by the arginine N-acetyltransferase avaD. The roles of the additional enzymes identified within the ava cluster still have to be determined. The polypeptide is Cytochrome P450 monooxygenase avaH (Aspergillus versicolor).